The following is a 1073-amino-acid chain: Guanylyl cyclase C (1073 aa).

The N-terminal stretch at Met1 to Pro23 is a signal peptide. Topologically, residues Ser24–Met433 are extracellular. Residues Asn32, Asn43, Asn79, Asn195, Asn284, Asn307, and Asn402 are each glycosylated (N-linked (GlcNAc...) asparagine). Residues Ile434 to Leu454 form a helical membrane-spanning segment. Over Arg455–Phe1073 the chain is Cytoplasmic. One can recognise a Protein kinase domain in the interval Leu489–Phe749. One can recognise a Guanylate cyclase domain in the interval Thr824 to Glu954.

This sequence belongs to the adenylyl cyclase class-4/guanylyl cyclase family. In terms of assembly, homotrimer. Interacts via its C-terminal region with NHERF4. Interacts with the lectin chaperone VIP36. Glycosylation at Asn-79 is required for interaction with VIP36 while glycosylation at Asn-402 modulates ligand-mediated GC-C activation.

It localises to the cell membrane. It is found in the endoplasmic reticulum membrane. The catalysed reaction is GTP = 3',5'-cyclic GMP + diphosphate. In terms of biological role, guanylyl cyclase that catalyzes synthesis of cyclic GMP (cGMP) from GTP. The chain is Guanylyl cyclase C (GUCY2C) from Sus scrofa (Pig).